Reading from the N-terminus, the 843-residue chain is Glycogen phosphorylase, brain form (843 aa).

Residue Ala2 is modified to N-acetylalanine. At Ser15 the chain carries Phosphoserine; by PHK; in form phosphorylase A. Residues Asp43, Tyr197, and Arg310 each contribute to the AMP site. Tyr197 carries the phosphotyrosine modification. The residue at position 473 (Tyr473) is a Phosphotyrosine. Lys569 contributes to the pyridoxal 5'-phosphate binding site. Residues 677-678 are pyridoxal 5'-phosphate; the sequence is TG. N6-(pyridoxal phosphate)lysine is present on Lys681.

The protein belongs to the glycogen phosphorylase family. Homodimer. Dimers associate into a tetramer to form the enzymatically active phosphorylase A. It depends on pyridoxal 5'-phosphate as a cofactor. Post-translationally, phosphorylated. Phosphorylation of Ser-15 converts phosphorylase B (unphosphorylated) to phosphorylase A.

The enzyme catalyses [(1-&gt;4)-alpha-D-glucosyl](n) + phosphate = [(1-&gt;4)-alpha-D-glucosyl](n-1) + alpha-D-glucose 1-phosphate. Activity of phosphorylase is controlled both by allosteric means (through the non-covalent binding of metabolites) and by covalent modification. Thus AMP allosterically activates, whereas ATP, ADP, and glucose-6-phosphate allosterically inhibit, phosphorylase B. Activated upon phosphorylation. Glycogen phosphorylase that regulates glycogen mobilization. Phosphorylase is an important allosteric enzyme in carbohydrate metabolism. Enzymes from different sources differ in their regulatory mechanisms and in their natural substrates. However, all known phosphorylases share catalytic and structural properties. The protein is Glycogen phosphorylase, brain form of Homo sapiens (Human).